The chain runs to 346 residues: UDP-3-O-acylglucosamine N-acyltransferase (346 aa).

Catalysis depends on H240, which acts as the Proton acceptor.

The protein belongs to the transferase hexapeptide repeat family. LpxD subfamily. As to quaternary structure, homotrimer.

It carries out the reaction a UDP-3-O-[(3R)-3-hydroxyacyl]-alpha-D-glucosamine + a (3R)-hydroxyacyl-[ACP] = a UDP-2-N,3-O-bis[(3R)-3-hydroxyacyl]-alpha-D-glucosamine + holo-[ACP] + H(+). It functions in the pathway bacterial outer membrane biogenesis; LPS lipid A biosynthesis. In terms of biological role, catalyzes the N-acylation of UDP-3-O-acylglucosamine using 3-hydroxyacyl-ACP as the acyl donor. Is involved in the biosynthesis of lipid A, a phosphorylated glycolipid that anchors the lipopolysaccharide to the outer membrane of the cell. This is UDP-3-O-acylglucosamine N-acyltransferase from Phocaeicola vulgatus (strain ATCC 8482 / DSM 1447 / JCM 5826 / CCUG 4940 / NBRC 14291 / NCTC 11154) (Bacteroides vulgatus).